The sequence spans 185 residues: ATP-dependent protease subunit HslV (185 aa).

Threonine 12 is an active-site residue. Alanine 168, cysteine 171, and threonine 174 together coordinate Na(+).

Belongs to the peptidase T1B family. HslV subfamily. In terms of assembly, a double ring-shaped homohexamer of HslV is capped on each side by a ring-shaped HslU homohexamer. The assembly of the HslU/HslV complex is dependent on binding of ATP.

It localises to the cytoplasm. The enzyme catalyses ATP-dependent cleavage of peptide bonds with broad specificity.. Its activity is regulated as follows. Allosterically activated by HslU binding. Functionally, protease subunit of a proteasome-like degradation complex believed to be a general protein degrading machinery. This is ATP-dependent protease subunit HslV from Cereibacter sphaeroides (strain ATCC 17029 / ATH 2.4.9) (Rhodobacter sphaeroides).